The chain runs to 337 residues: Transaldolase (337 aa).

N6-acetyllysine is present on Lys-115. The Schiff-base intermediate with substrate role is filled by Lys-142. Lys-219 bears the N6-acetyllysine mark. Residues Ser-237 and Ser-256 each carry the phosphoserine modification. N6-acetyllysine occurs at positions 269, 286, and 321.

The protein belongs to the transaldolase family. Type 1 subfamily. Homodimer.

The protein resides in the cytoplasm. The catalysed reaction is D-sedoheptulose 7-phosphate + D-glyceraldehyde 3-phosphate = D-erythrose 4-phosphate + beta-D-fructose 6-phosphate. The protein operates within carbohydrate degradation; pentose phosphate pathway; D-glyceraldehyde 3-phosphate and beta-D-fructose 6-phosphate from D-ribose 5-phosphate and D-xylulose 5-phosphate (non-oxidative stage): step 2/3. Functionally, transaldolase is important for the balance of metabolites in the pentose-phosphate pathway. In Bos taurus (Bovine), this protein is Transaldolase (TALDO1).